The sequence spans 344 residues: Succinylglutamate desuccinylase (344 aa).

Residues histidine 63, glutamate 66, and histidine 160 each contribute to the Zn(2+) site. Residue glutamate 224 is part of the active site.

Belongs to the AspA/AstE family. Succinylglutamate desuccinylase subfamily. Zn(2+) serves as cofactor.

It carries out the reaction N-succinyl-L-glutamate + H2O = L-glutamate + succinate. Its pathway is amino-acid degradation; L-arginine degradation via AST pathway; L-glutamate and succinate from L-arginine: step 5/5. Transforms N(2)-succinylglutamate into succinate and glutamate. In Shewanella sp. (strain MR-4), this protein is Succinylglutamate desuccinylase.